The sequence spans 929 residues: Ras guanine nucleotide exchange factor M (929 aa).

The segment covering 1 to 15 (MWQKPSLTKSMMNEV) has biased composition (polar residues). 2 disordered regions span residues 1–102 (MWQK…AAGS) and 169–316 (TNNN…SKSL). Positions 16-33 (SSNSPKSPTLTSSPSTQS) are enriched in low complexity. The segment covering 44 to 67 (LDGGGGGSNRLIFGGSGGGSGGGS) has biased composition (gly residues). Composition is skewed to low complexity over residues 68-80 (LPSS…VNPF) and 169-191 (TNNN…NNDG). A compositionally biased stretch (gly residues) spans 192 to 202 (SGSGSGAGGSF). The segment covering 203–246 (IGTTTSAKTTSTTSTSAATTTTTTTTSSSSSSPSSSSPSSTSPT) has biased composition (low complexity). Residues 247–256 (IASNNDNNNK) show a composition bias toward polar residues. Residues 270–287 (PPLTLSQSQTQQQQQQKV) are compositionally biased toward low complexity. Over residues 295 to 305 (RFSTNSSGSQS) the composition is skewed to polar residues. The N-terminal Ras-GEF domain maps to 390-528 (NKFVVVSGPK…PILDLYEKLK (139 aa)). Residues 540 to 583 (SLSGSGGISNNNNGSDLKNSNNGNNSSNNNNSSSNSSSSSSSSD) are disordered. The Ras-GEF domain occupies 676-911 (SPQDIAKQLT…YAFSKFIESP (236 aa)).

In terms of biological role, promotes the exchange of Ras-bound GDP by GTP. This Dictyostelium discoideum (Social amoeba) protein is Ras guanine nucleotide exchange factor M (gefM).